A 324-amino-acid polypeptide reads, in one-letter code: Succinylglutamate desuccinylase (324 aa).

Positions 53, 56, and 148 each coordinate Zn(2+). E211 is an active-site residue.

Belongs to the AspA/AstE family. Succinylglutamate desuccinylase subfamily. The cofactor is Zn(2+).

It catalyses the reaction N-succinyl-L-glutamate + H2O = L-glutamate + succinate. It participates in amino-acid degradation; L-arginine degradation via AST pathway; L-glutamate and succinate from L-arginine: step 5/5. In terms of biological role, transforms N(2)-succinylglutamate into succinate and glutamate. This is Succinylglutamate desuccinylase from Acinetobacter baumannii (strain SDF).